A 264-amino-acid polypeptide reads, in one-letter code: Zinc finger protein CG30 (264 aa).

The RING-type zinc finger occupies 8 to 63; it reads CNICFSVAEIKNYFLQPIDRLTIIPVLELDTCKHQLCSMCIRKIRKRKKVPCPLCR.

The protein localises to the host nucleus. In terms of biological role, plays a role in the proper expression of late and very late genes. The polypeptide is Zinc finger protein CG30 (CG30) (Autographa californica nuclear polyhedrosis virus (AcMNPV)).